Reading from the N-terminus, the 96-residue chain is Protein RnfH (96 aa).

This sequence belongs to the UPF0125 (RnfH) family.

This is Protein RnfH from Escherichia coli O81 (strain ED1a).